Reading from the N-terminus, the 192-residue chain is Ion-translocating oxidoreductase complex subunit B (192 aa).

Residues 1–26 are hydrophobic; the sequence is MNAIWIAVAAVSLLALAFGAILGYAS. The region spanning 32–91 is the 4Fe-4S domain; sequence EDDPVVEKIDEILPQSQCGQCGYPGCRPYAEAISCNGEKINRCAPGGEAVMLKIAELLNV. [4Fe-4S] cluster contacts are provided by Cys-49, Cys-52, Cys-57, Cys-74, Cys-117, Cys-120, Cys-123, Cys-127, Cys-147, Cys-150, Cys-153, and Cys-157. 4Fe-4S ferredoxin-type domains follow at residues 108–137 and 138–167; these read MVAVIDENNCIGCTKCIQACPVDAIVGATR and AMHTVMSDLCTGCNLCVDPCPTHCISLQPV.

Belongs to the 4Fe4S bacterial-type ferredoxin family. RnfB subfamily. The complex is composed of six subunits: RsxA, RsxB, RsxC, RsxD, RsxE and RsxG. Requires [4Fe-4S] cluster as cofactor.

Its subcellular location is the cell inner membrane. Functionally, part of a membrane-bound complex that couples electron transfer with translocation of ions across the membrane. Required to maintain the reduced state of SoxR. The protein is Ion-translocating oxidoreductase complex subunit B of Escherichia coli O81 (strain ED1a).